Reading from the N-terminus, the 266-residue chain is Imidazole glycerol phosphate synthase subunit HisF (266 aa).

Active-site residues include D11 and D130.

Belongs to the HisA/HisF family. Heterodimer of HisH and HisF.

It localises to the cytoplasm. It catalyses the reaction 5-[(5-phospho-1-deoxy-D-ribulos-1-ylimino)methylamino]-1-(5-phospho-beta-D-ribosyl)imidazole-4-carboxamide + L-glutamine = D-erythro-1-(imidazol-4-yl)glycerol 3-phosphate + 5-amino-1-(5-phospho-beta-D-ribosyl)imidazole-4-carboxamide + L-glutamate + H(+). Its pathway is amino-acid biosynthesis; L-histidine biosynthesis; L-histidine from 5-phospho-alpha-D-ribose 1-diphosphate: step 5/9. Its function is as follows. IGPS catalyzes the conversion of PRFAR and glutamine to IGP, AICAR and glutamate. The HisF subunit catalyzes the cyclization activity that produces IGP and AICAR from PRFAR using the ammonia provided by the HisH subunit. This Nitrosopumilus maritimus (strain SCM1) protein is Imidazole glycerol phosphate synthase subunit HisF.